Reading from the N-terminus, the 717-residue chain is F-box only protein 42 (717 aa).

The segment covering 1 to 30 (MASSSDSEDDSFMAVDQEETVLEGTMDQDE) has biased composition (acidic residues). Residues 1–34 (MASSSDSEDDSFMAVDQEETVLEGTMDQDEEPHP) form a disordered region. An F-box domain is found at 44–93 (NRSMSELPEEVLEYILSFLSPYQEHKTAALVCKQWYRLIKGVAHQCYHGF). 4 Kelch repeats span residues 132–184 (SMYV…VYKD), 186–242 (LVLF…VIDD), 244–293 (MIVF…VIDD), and 295–342 (TILI…LWCH). A disordered region spans residues 361-474 (RAPLSPSLNS…PSTPSAPEGY (114 aa)). Residues 363–376 (PLSPSLNSRPSPIS) show a composition bias toward low complexity. Residues Ser-365 and Ser-373 each carry the phosphoserine modification. A Phosphothreonine modification is found at Thr-378. Composition is skewed to polar residues over residues 416–426 (QRQTPSGSREG) and 455–469 (SLDS…STPS). Ser-552 carries the post-translational modification Phosphoserine. Low complexity predominate over residues 570-596 (GPSASAALSPPLGSSPGSPGSQSLSSG). The disordered stretch occupies residues 570-631 (GPSASAALSP…GHHPPQSLNV (62 aa)).

Component of some SCF complex, composed of CUL1, SKP1, RBX1 and FBXO42. Interacts (via the kelch domain) with p53/TP53; interaction is direct.

Substrate-recognition component of some SCF (SKP1-CUL1-F-box protein)-type E3 ubiquitin ligase complex. Specifically recognizes p53/TP53, promoting its ubiquitination and degradation. The chain is F-box only protein 42 (FBXO42) from Homo sapiens (Human).